The sequence spans 338 residues: MSRTSLTRFLIQEQHAGRINADLRQLIAVVARACTSISIAVSKGALGGVLGDAGTGNVQGEAQKKLDVISNEILLEANAWGGHLAACASEEMDHSQPVPDIYPRGDFLLLFDPLDGSSNIDVNVSVGTIFSVLRCPTNVELPGDDAFLQPGSKQIAAGYCIYGPSTQLVLTVGHGTHAFTLDREKGEFVLTTENMQIPAATQEFAINMSNQRHWEAPMQAYVGDLLAGKEGARGKNFNMRWIASMVADVHRILTRGGIFIYPWDKKDPSKAGKLRLMYEANPMGLLVEQAGGAAWTGRERILDIQPDQLHQRVPVFLGSREEVAEAVRYHHAHDDARG.

Mg(2+)-binding residues include Glu90, Asp112, Leu114, and Asp115. Residues 115–118 (DGSS), Asn207, and Lys273 contribute to the substrate site. A Mg(2+)-binding site is contributed by Glu279.

This sequence belongs to the FBPase class 1 family. In terms of assembly, homotetramer. The cofactor is Mg(2+).

The protein resides in the cytoplasm. It carries out the reaction beta-D-fructose 1,6-bisphosphate + H2O = beta-D-fructose 6-phosphate + phosphate. It participates in carbohydrate biosynthesis; gluconeogenesis. This Stenotrophomonas maltophilia (strain R551-3) protein is Fructose-1,6-bisphosphatase class 1.